A 136-amino-acid chain; its full sequence is MFQSLIAIDYGKARIGIASGQMITKTATPIGTVEAYDGVPNWIELDKIIKRWNPSDIIIGLPLDTQNFETDITKSAKDFAKEVQQRYQRKVHLINEAYSTREARWRLEEFKSKKISHIKVDALAACVILETWMSEN.

The protein belongs to the YqgF nuclease family.

The protein resides in the cytoplasm. Could be a nuclease involved in processing of the 5'-end of pre-16S rRNA. In Francisella tularensis subsp. mediasiatica (strain FSC147), this protein is Putative pre-16S rRNA nuclease.